Consider the following 372-residue polypeptide: Carbamoyl phosphate synthase small chain (372 aa).

Residues 1-186 (MTYCKRGTEG…IHQNNSPDII (186 aa)) are CPSase. L-glutamine is bound by residues S52, G233, and G235. Residues 185–372 (IIVLVDCGIK…KKMVIKDEGN (188 aa)) form the Glutamine amidotransferase type-1 domain. C261 serves as the catalytic Nucleophile. 5 residues coordinate L-glutamine: L262, Q265, N303, G305, and Y306. Active-site residues include H345 and E347.

Belongs to the CarA family. In terms of assembly, composed of two chains; the small (or glutamine) chain promotes the hydrolysis of glutamine to ammonia, which is used by the large (or ammonia) chain to synthesize carbamoyl phosphate. Tetramer of heterodimers (alpha,beta)4.

The catalysed reaction is hydrogencarbonate + L-glutamine + 2 ATP + H2O = carbamoyl phosphate + L-glutamate + 2 ADP + phosphate + 2 H(+). It carries out the reaction L-glutamine + H2O = L-glutamate + NH4(+). It functions in the pathway amino-acid biosynthesis; L-arginine biosynthesis; carbamoyl phosphate from bicarbonate: step 1/1. The protein operates within pyrimidine metabolism; UMP biosynthesis via de novo pathway; (S)-dihydroorotate from bicarbonate: step 1/3. In terms of biological role, small subunit of the glutamine-dependent carbamoyl phosphate synthetase (CPSase). CPSase catalyzes the formation of carbamoyl phosphate from the ammonia moiety of glutamine, carbonate, and phosphate donated by ATP, constituting the first step of 2 biosynthetic pathways, one leading to arginine and/or urea and the other to pyrimidine nucleotides. The small subunit (glutamine amidotransferase) binds and cleaves glutamine to supply the large subunit with the substrate ammonia. This is Carbamoyl phosphate synthase small chain from Metallosphaera sedula (strain ATCC 51363 / DSM 5348 / JCM 9185 / NBRC 15509 / TH2).